The sequence spans 470 residues: Origin of replication complex subunit 4 (470 aa).

63–70 serves as a coordination point for ATP; it reads GPRGCGKA.

This sequence belongs to the ORC4 family. Component of the origin recognition complex (ORC) composed of at least ORC1, ORC2, ORC3, ORC4, ORC5 and ORC6. ORC is regulated in a cell-cycle and development dependent manner. It is sequentially assembled at the exit from anaphase of mitosis and disassembled as cells enter S phase. In terms of tissue distribution, expressed in the shoot apical meristem (SAM), leaves, ears and roots (including root tips).

Its subcellular location is the nucleus. Functionally, component of the origin recognition complex (ORC) that binds origins of replication. DNA-binding is ATP-dependent. The specific DNA sequences that define origins of replication have not been identified yet. ORC is required to assemble the pre-replication complex necessary to initiate DNA replication. This is Origin of replication complex subunit 4 from Oryza sativa subsp. japonica (Rice).